A 236-amino-acid chain; its full sequence is Purine nucleoside phosphorylase DeoD-type (236 aa).

His-5 serves as a coordination point for a purine D-ribonucleoside. Phosphate contacts are provided by residues Gly-21, Arg-25, Arg-44, and 88–91 (RVGT). A purine D-ribonucleoside-binding positions include 180–182 (EME) and 204–205 (SD). Asp-205 acts as the Proton donor in catalysis.

It belongs to the PNP/UDP phosphorylase family. In terms of assembly, homohexamer; trimer of homodimers.

It catalyses the reaction a purine D-ribonucleoside + phosphate = a purine nucleobase + alpha-D-ribose 1-phosphate. It carries out the reaction a purine 2'-deoxy-D-ribonucleoside + phosphate = a purine nucleobase + 2-deoxy-alpha-D-ribose 1-phosphate. Functionally, catalyzes the reversible phosphorolytic breakdown of the N-glycosidic bond in the beta-(deoxy)ribonucleoside molecules, with the formation of the corresponding free purine bases and pentose-1-phosphate. The chain is Purine nucleoside phosphorylase DeoD-type from Shewanella denitrificans (strain OS217 / ATCC BAA-1090 / DSM 15013).